Here is a 427-residue protein sequence, read N- to C-terminus: Enolase 2 (427 aa).

Gln-163 is a binding site for (2R)-2-phosphoglycerate. Glu-205 (proton donor) is an active-site residue. Positions 242, 285, and 312 each coordinate Mg(2+). Residues Lys-337, Arg-366, Ser-367, and Lys-388 each contribute to the (2R)-2-phosphoglycerate site. Lys-337 serves as the catalytic Proton acceptor.

This sequence belongs to the enolase family. In terms of assembly, component of the RNA degradosome, a multiprotein complex involved in RNA processing and mRNA degradation. Mg(2+) is required as a cofactor.

It is found in the cytoplasm. It localises to the secreted. The protein resides in the cell surface. It carries out the reaction (2R)-2-phosphoglycerate = phosphoenolpyruvate + H2O. Its pathway is carbohydrate degradation; glycolysis; pyruvate from D-glyceraldehyde 3-phosphate: step 4/5. Its function is as follows. Catalyzes the reversible conversion of 2-phosphoglycerate (2-PG) into phosphoenolpyruvate (PEP). It is essential for the degradation of carbohydrates via glycolysis. This Methylococcus capsulatus (strain ATCC 33009 / NCIMB 11132 / Bath) protein is Enolase 2.